The sequence spans 1050 residues: Beta-galactosidase (1050 aa).

Substrate-binding residues include Asn100 and Asp199. Asp199 contacts Na(+). 3 residues coordinate Mg(2+): Glu422, His424, and Glu467. Substrate contacts are provided by residues Glu467 and 543-546 (EYAH). The active-site Proton donor is the Glu467. The active-site Nucleophile is the Glu543. Asn603 is a binding site for Mg(2+). The Na(+) site is built by Phe607 and Asn610. Positions 610 and 1025 each coordinate substrate.

Belongs to the glycosyl hydrolase 2 family. As to quaternary structure, homotetramer. It depends on Mg(2+) as a cofactor. Na(+) serves as cofactor.

It catalyses the reaction Hydrolysis of terminal non-reducing beta-D-galactose residues in beta-D-galactosides.. This is Beta-galactosidase from Yersinia pestis bv. Antiqua (strain Angola).